The sequence spans 323 residues: Penicillopepsin-1 (323 aa).

The O-linked (Man...) serine glycan is linked to Ser-3. Residue Thr-7 is glycosylated (O-linked (Man...) threonine). The Peptidase A1 domain maps to 17–320 (YITPVTIGGT…DSDGPQLGFA (304 aa)). Active-site residues include Asp-33 and Asp-213. Cysteines 249 and 283 form a disulfide.

This sequence belongs to the peptidase A1 family. Monomer.

The protein resides in the secreted. The catalysed reaction is Hydrolysis of proteins with broad specificity similar to that of pepsin A, preferring hydrophobic residues at P1 and P1', but also cleaving 20-Gly-|-Glu-21 in the B chain of insulin. Clots milk, and activates trypsinogen.. Functionally, secreted aspartic endopeptidase that allows assimilation of proteinaceous substrates. The scissile peptide bond is attacked by a nucleophilic water molecule activated by two aspartic residues in the active site. Shows a broad primary substrate specificity. Favors hydrophobic residues at the P1 and P1' positions, but can also activate trypsinogen and hydrolyze the B chain of insulin between positions 'Gly-20' and 'Glu-21'. The polypeptide is Penicillopepsin-1 (Penicillium janthinellum (Penicillium vitale)).